A 745-amino-acid chain; its full sequence is Centromere protein I (745 aa).

Polar residues predominate over residues 1 to 27 (MATPRLTRNSQQQNRISQGSNSRQTTL). Residues 1–58 (MATPRLTRNSQQQNRISQGSNSRQTTLLDWKVKDKAGNSKSVLEESSSLEDSNHADDQ) are disordered. Low complexity predominate over residues 39 to 50 (SKSVLEESSSLE).

The protein belongs to the CENP-I/CTF3 family. Component of the CENPA-CAD complex, composed of CENPI, CENPK, CENPL, CENPO, CENPP, CENPQ, CENPR and CENPS. The CENPA-CAD complex interacts with the CENPA-NAC complex, at least composed of CENPA, CENPC, CENPH, CENPM, CENPN, CENPT and CENPU. Interacts with SENP6. Post-translationally, sumoylated. Sumoylated form can be polyubiquitinated by RNF4, leading to its degradation. Desumoylation by SENP6 prevents its degradation. Highly expressed in testis, ovary and spleen. A much lower mRNA level is found in brain and lung, and no expression is detected in liver, kidney, heart, muscle, pituitary gland, prostate, epididymis and seminal vesicle.

It localises to the nucleus. The protein resides in the chromosome. It is found in the centromere. Functionally, component of the CENPA-CAD (nucleosome distal) complex, a complex recruited to centromeres which is involved in assembly of kinetochore proteins, mitotic progression and chromosome segregation. May be involved in incorporation of newly synthesized CENPA into centromeres via its interaction with the CENPA-NAC complex. Required for the localization of CENPF, MAD1L1 and MAD2 (MAD2L1 or MAD2L2) to kinetochores. Involved in the response of gonadal tissues to follicle-stimulating hormone. This is Centromere protein I (Cenpi) from Rattus norvegicus (Rat).